The chain runs to 203 residues: EF-hand calcium-binding domain-containing protein 8 (203 aa).

Positions S61–Q107 are disordered. Over residues R87–Q107 the composition is skewed to polar residues. 2 consecutive EF-hand domains span residues M111 to S145 and M146 to G181.

The chain is EF-hand calcium-binding domain-containing protein 8 (Efcab8) from Mus musculus (Mouse).